The sequence spans 132 residues: Large-conductance mechanosensitive channel (132 aa).

The next 2 helical transmembrane spans lie at 14 to 34 (VIDLAVGVVIGAAFGKIVSSL) and 67 to 87 (GNFIQTIFDFLIIAAAIFMFV).

It belongs to the MscL family. As to quaternary structure, homopentamer.

It localises to the cell membrane. Its function is as follows. Channel that opens in response to stretch forces in the membrane lipid bilayer. May participate in the regulation of osmotic pressure changes within the cell. In Bacillus anthracis (strain A0248), this protein is Large-conductance mechanosensitive channel.